A 1076-amino-acid polypeptide reads, in one-letter code: Serine/threonine-protein phosphatase 6 regulatory ankyrin repeat subunit C (1076 aa).

ANK repeat units follow at residues 7 to 36 (TDQP…NINV), 40 to 69 (ERRT…NVNA), 73 to 102 (LWLT…DVNA), 106 to 135 (LWQT…SLNV), 139 to 168 (SGRS…SLNV), 172 to 201 (KERQ…DLGC), 205 to 234 (KGYG…EIDE), 238 to 267 (FGNT…NVNQ), 271 to 301 (KGFT…DVNY), 305 to 334 (EGKS…EIDC), 338 to 367 (FGNT…DTAR), 371 to 400 (HDMF…LYSI), 422 to 451 (LGRT…DLRR), 455 to 484 (FGRT…GVNE), 488 to 545 (KGCS…DPSL), 549 to 579 (QGYT…CLED), 584 to 613 (IPVS…NLDV), 617 to 646 (KGRT…SALI), 651 to 680 (RKWT…RADI), 687 to 716 (YGQT…TADA), 720 to 749 (RGRT…FVLC), 753 to 782 (KGRT…STDP), 790 to 819 (SGYS…FSYL), 822 to 852 (NPFT…KIVN), 857 to 886 (KGRT…EVNA), 890 to 920 (TGRT…DLTV), 924 to 953 (NKNT…DLGL), and 960 to 989 (ALQM…TVLA). Residues 502 to 514 (YRRAEPHTPSSHD) show a composition bias toward basic and acidic residues. Positions 502 to 522 (YRRAEPHTPSSHDAEEDEPLK) are disordered. S1028 and S1075 each carry phosphoserine.

As to quaternary structure, protein phosphatase 6 (PP6) holoenzyme is proposed to be a heterotrimeric complex formed by the catalytic subunit, a SAPS domain-containing subunit (PP6R) and an ankyrin repeat-domain containing regulatory subunit (ARS). Interacts with PPP6R1.

Functionally, putative regulatory subunit of protein phosphatase 6 (PP6) that may be involved in the recognition of phosphoprotein substrates. This is Serine/threonine-protein phosphatase 6 regulatory ankyrin repeat subunit C (ANKRD52) from Homo sapiens (Human).